Here is a 261-residue protein sequence, read N- to C-terminus: Enolase-phosphatase E1 (261 aa).

Mg(2+) contacts are provided by D16 and E18. Substrate-binding positions include 150–151 and K184; that span reads SS. D209 serves as a coordination point for Mg(2+).

The protein belongs to the HAD-like hydrolase superfamily. MasA/MtnC family. Monomer. The cofactor is Mg(2+).

It is found in the cytoplasm. The protein resides in the nucleus. The catalysed reaction is 5-methylsulfanyl-2,3-dioxopentyl phosphate + H2O = 1,2-dihydroxy-5-(methylsulfanyl)pent-1-en-3-one + phosphate. It participates in amino-acid biosynthesis; L-methionine biosynthesis via salvage pathway; L-methionine from S-methyl-5-thio-alpha-D-ribose 1-phosphate: step 3/6. The protein operates within amino-acid biosynthesis; L-methionine biosynthesis via salvage pathway; L-methionine from S-methyl-5-thio-alpha-D-ribose 1-phosphate: step 4/6. Bifunctional enzyme that catalyzes the enolization of 2,3-diketo-5-methylthiopentyl-1-phosphate (DK-MTP-1-P) into the intermediate 2-hydroxy-3-keto-5-methylthiopentenyl-1-phosphate (HK-MTPenyl-1-P), which is then dephosphorylated to form the acireductone 1,2-dihydroxy-3-keto-5-methylthiopentene (DHK-MTPene). In Rattus norvegicus (Rat), this protein is Enolase-phosphatase E1 (Enoph1).